The sequence spans 552 residues: Arginine--tRNA ligase (552 aa).

The short motif at A123 to R133 is the 'HIGH' region element.

The protein belongs to the class-I aminoacyl-tRNA synthetase family. Monomer.

It is found in the cytoplasm. The catalysed reaction is tRNA(Arg) + L-arginine + ATP = L-arginyl-tRNA(Arg) + AMP + diphosphate. This Pelodictyon phaeoclathratiforme (strain DSM 5477 / BU-1) protein is Arginine--tRNA ligase.